The chain runs to 209 residues: Ubiquitin-conjugating enzyme E2 S (209 aa).

The UBC core domain maps to 14–160; sequence QTIRQVMREL…ARMMTEIHAQ (147 aa). The active-site Glycyl thioester intermediate is the cysteine 98. The disordered stretch occupies residues 168-194; the sequence is AVGDAKDDGGPSTKKHAGLDKKLQDKK. Basic and acidic residues predominate over residues 184–194; that stretch reads AGLDKKLQDKK.

It belongs to the ubiquitin-conjugating enzyme family.

It carries out the reaction S-ubiquitinyl-[E1 ubiquitin-activating enzyme]-L-cysteine + [E2 ubiquitin-conjugating enzyme]-L-cysteine = [E1 ubiquitin-activating enzyme]-L-cysteine + S-ubiquitinyl-[E2 ubiquitin-conjugating enzyme]-L-cysteine.. Its pathway is protein modification; protein ubiquitination. Functionally, catalyzes the covalent attachment of ubiquitin to other proteins. Acts as an essential factor of the anaphase promoting complex/cyclosome (APC/C), a cell cycle-regulated ubiquitin ligase that controls progression through mitosis. Acts by specifically elongating polyubiquitin chains initiated by the E2 enzyme vih/UbcH10 on APC/C substrates, enhancing the degradation of APC/C substrates by the proteasome and promoting mitotic exit. This is Ubiquitin-conjugating enzyme E2 S from Drosophila melanogaster (Fruit fly).